The primary structure comprises 314 residues: Fibrinogen-like protein 1 (314 aa).

The signal sequence occupies residues 1–22 (MGEIRSFLLVTIALMMGREIWA). A coiled-coil region spans residues 25–59 (NSKCLLEQERLRAQVQQLETRVKQQQARIAQLMHE). Residues 76–308 (LGGKRQYADC…SVVMKIRPND (233 aa)) enclose the Fibrinogen C-terminal domain. Intrachain disulfides connect cysteine 85–cysteine 114 and cysteine 250–cysteine 263.

As to quaternary structure, homodimer. Interacts (via the Fibrinogen C-terminal domain) with LAG3 (via Ig-like domains 1 and 2).

It localises to the secreted. Functionally, immune suppressive molecule that inhibits antigen-specific T-cell activation by acting as a major ligand of LAG3. Responsible for LAG3 T-cell inhibitory function. Binds LAG3 independently from MHC class II (MHC-II). Secreted by, and promotes growth of, hepatocytes. This is Fibrinogen-like protein 1 from Mesocricetus auratus (Golden hamster).